The chain runs to 163 residues: Large ribosomal subunit protein eL24y (163 aa).

A compositionally biased stretch (basic and acidic residues) spans 119–133 (IKKTKDEKKAKKVEF). Residues 119-163 (IKKTKDEKKAKKVEFASKQQKVKANFPKAAAASKGPKVGGGGGKR) are disordered.

Belongs to the eukaryotic ribosomal protein eL24 family. As to quaternary structure, interacts with REIL1 and REIL2. Component of the large ribosomal subunit. Ubiquitous.

The protein localises to the cytoplasm. It is found in the nucleus. Its subcellular location is the nucleolus. It localises to the nucleoplasm. Its function is as follows. Might have an extraribosomal function in reinitiation of translation of ETTIN and MONOPTEROS genes that are involved in the auxin-mediated gynoecium patterning. Essential in leaf polarity establishment, probably having a role for translation in leaf dorsoventral patterning to specify leaf adaxial identity. The chain is Large ribosomal subunit protein eL24y from Arabidopsis thaliana (Mouse-ear cress).